Here is a 491-residue protein sequence, read N- to C-terminus: Probable cytosol aminopeptidase (491 aa).

Residues Lys261 and Asp266 each contribute to the Mn(2+) site. Residue Lys273 is part of the active site. Residues Asp284, Asp343, and Glu345 each coordinate Mn(2+). Residue Arg347 is part of the active site.

This sequence belongs to the peptidase M17 family. The cofactor is Mn(2+).

It localises to the cytoplasm. The catalysed reaction is Release of an N-terminal amino acid, Xaa-|-Yaa-, in which Xaa is preferably Leu, but may be other amino acids including Pro although not Arg or Lys, and Yaa may be Pro. Amino acid amides and methyl esters are also readily hydrolyzed, but rates on arylamides are exceedingly low.. It carries out the reaction Release of an N-terminal amino acid, preferentially leucine, but not glutamic or aspartic acids.. In terms of biological role, presumably involved in the processing and regular turnover of intracellular proteins. Catalyzes the removal of unsubstituted N-terminal amino acids from various peptides. The protein is Probable cytosol aminopeptidase of Stenotrophomonas maltophilia (strain K279a).